Here is a 432-residue protein sequence, read N- to C-terminus: Serine--tRNA ligase (432 aa).

238-240 (TAE) contributes to the L-serine binding site. 269–271 (RSE) is an ATP binding site. Glutamate 292 contacts L-serine. ATP is bound at residue 357–360 (EISS). Residue serine 393 coordinates L-serine.

The protein belongs to the class-II aminoacyl-tRNA synthetase family. Type-1 seryl-tRNA synthetase subfamily. In terms of assembly, homodimer. The tRNA molecule binds across the dimer.

The protein localises to the cytoplasm. It catalyses the reaction tRNA(Ser) + L-serine + ATP = L-seryl-tRNA(Ser) + AMP + diphosphate + H(+). It carries out the reaction tRNA(Sec) + L-serine + ATP = L-seryl-tRNA(Sec) + AMP + diphosphate + H(+). It participates in aminoacyl-tRNA biosynthesis; selenocysteinyl-tRNA(Sec) biosynthesis; L-seryl-tRNA(Sec) from L-serine and tRNA(Sec): step 1/1. Functionally, catalyzes the attachment of serine to tRNA(Ser). Is also able to aminoacylate tRNA(Sec) with serine, to form the misacylated tRNA L-seryl-tRNA(Sec), which will be further converted into selenocysteinyl-tRNA(Sec). The chain is Serine--tRNA ligase from Hyphomonas neptunium (strain ATCC 15444).